The sequence spans 364 residues: tRNA 2-selenouridine synthase (364 aa).

One can recognise a Rhodanese domain in the interval 14 to 137 (LIADTPIIDV…LRQTAIQATI (124 aa)). Cysteine 97 functions as the S-selanylcysteine intermediate in the catalytic mechanism.

This sequence belongs to the SelU family. Monomer.

The catalysed reaction is 5-methylaminomethyl-2-thiouridine(34) in tRNA + selenophosphate + (2E)-geranyl diphosphate + H2O + H(+) = 5-methylaminomethyl-2-selenouridine(34) in tRNA + (2E)-thiogeraniol + phosphate + diphosphate. The enzyme catalyses 5-methylaminomethyl-2-thiouridine(34) in tRNA + (2E)-geranyl diphosphate = 5-methylaminomethyl-S-(2E)-geranyl-thiouridine(34) in tRNA + diphosphate. It carries out the reaction 5-methylaminomethyl-S-(2E)-geranyl-thiouridine(34) in tRNA + selenophosphate + H(+) = 5-methylaminomethyl-2-(Se-phospho)selenouridine(34) in tRNA + (2E)-thiogeraniol. It catalyses the reaction 5-methylaminomethyl-2-(Se-phospho)selenouridine(34) in tRNA + H2O = 5-methylaminomethyl-2-selenouridine(34) in tRNA + phosphate. Involved in the post-transcriptional modification of the uridine at the wobble position (U34) of tRNA(Lys), tRNA(Glu) and tRNA(Gln). Catalyzes the conversion of 2-thiouridine (S2U-RNA) to 2-selenouridine (Se2U-RNA). Acts in a two-step process involving geranylation of 2-thiouridine (S2U) to S-geranyl-2-thiouridine (geS2U) and subsequent selenation of the latter derivative to 2-selenouridine (Se2U) in the tRNA chain. In Shigella flexneri serotype 5b (strain 8401), this protein is tRNA 2-selenouridine synthase.